Consider the following 717-residue polypeptide: Catalase-peroxidase (717 aa).

A signal peptide spans 1 to 12; the sequence is MTSKGMCPVAHG. The segment at residues 93 to 221 is a cross-link (tryptophyl-tyrosyl-methioninium (Trp-Tyr) (with M-247)); that stretch reads WHSAGSYRIA…LAAVMMGLIY (129 aa). His-94 acts as the Proton acceptor in catalysis. Residues 221–247 constitute a cross-link (tryptophyl-tyrosyl-methioninium (Tyr-Met) (with W-93)); that stretch reads YVNPEGVDGKPDPLKTAQDMRVTFARM. His-262 contributes to the heme b binding site.

This sequence belongs to the peroxidase family. Peroxidase/catalase subfamily. Homodimer or homotetramer. It depends on heme b as a cofactor. In terms of processing, formation of the three residue Trp-Tyr-Met cross-link is important for the catalase, but not the peroxidase activity of the enzyme.

It carries out the reaction H2O2 + AH2 = A + 2 H2O. It catalyses the reaction 2 H2O2 = O2 + 2 H2O. Bifunctional enzyme with both catalase and broad-spectrum peroxidase activity. The chain is Catalase-peroxidase from Polynucleobacter asymbioticus (strain DSM 18221 / CIP 109841 / QLW-P1DMWA-1) (Polynucleobacter necessarius subsp. asymbioticus).